The following is a 353-amino-acid chain: Rhodopsin (353 aa).

The Extracellular portion of the chain corresponds to 1-36 (MNGTEGDNFYVPFSNKTGLARSPYEYPQYYLAEPWK). Asn-2 and Asn-15 each carry an N-linked (GlcNAc...) asparagine glycan. A helical transmembrane segment spans residues 37–61 (YSALAAYMFFLILVGFPVNFLTLFV). Topologically, residues 62–73 (TVQHKKLRTPLN) are cytoplasmic. The helical transmembrane segment at 74–96 (YILLNLAMANLFMVLFGFTVTMY) threads the bilayer. The Extracellular segment spans residues 97–110 (TSMNGYFVFGPTMC). Cys-110 and Cys-187 are disulfide-bonded. The chain crosses the membrane as a helical span at residues 111–133 (SIEGFFATLGGEVALWSLVVLAI). The 'Ionic lock' involved in activated form stabilization motif lies at 134–136 (ERY). Residues 134–152 (ERYIVICKPMGNFRFGNTH) are Cytoplasmic-facing. A helical membrane pass occupies residues 153–173 (AIMGVAFTWIMALACAAPPLV). Topologically, residues 174-202 (GWSRYIPEGMQCSCGPDYYTLNPNFNNES) are extracellular. The helical transmembrane segment at 203–224 (YVVYMFVVHFLVPFVIIFFCYG) threads the bilayer. The Cytoplasmic segment spans residues 225–252 (RLLCTVKEAAAAQQESASTQKAEKEVTR). A helical membrane pass occupies residues 253–274 (MVVLMVIGFLVCWVPYASVAFY). Residues 275 to 286 (IFTHQGSDFGAT) lie on the Extracellular side of the membrane. The chain crosses the membrane as a helical span at residues 287–308 (FMTLPAFFAKSSALYNPVIYIL). Lys-296 is modified (N6-(retinylidene)lysine). Topologically, residues 309–353 (MNKQFRNCMITTLCCGKNPLGDDESGASTSKTEVSSVSTSPVSPA) are cytoplasmic. The disordered stretch occupies residues 330–353 (DDESGASTSKTEVSSVSTSPVSPA). Low complexity predominate over residues 336–353 (STSKTEVSSVSTSPVSPA).

It belongs to the G-protein coupled receptor 1 family. Opsin subfamily. Post-translationally, phosphorylated on some or all of the serine and threonine residues present in the C-terminal region. In terms of processing, contains one covalently linked retinal chromophore. As to expression, short photoreceptor cells.

It is found in the membrane. Its subcellular location is the cell projection. It localises to the cilium. The protein resides in the photoreceptor outer segment. In terms of biological role, photoreceptor required for image-forming vision at low light intensity. While most salt water fish species use retinal as chromophore, most freshwater fish use 3-dehydroretinal, or a mixture of retinal and 3-dehydroretinal. Light-induced isomerization of 11-cis to all-trans retinal triggers a conformational change that activates signaling via G-proteins. Subsequent receptor phosphorylation mediates displacement of the bound G-protein alpha subunit by arrestin and terminates signaling. This Lethenteron camtschaticum (Japanese lamprey) protein is Rhodopsin (RHO).